The chain runs to 126 residues: Small ribosomal subunit protein uS11 (126 aa).

The protein belongs to the universal ribosomal protein uS11 family. Part of the 30S ribosomal subunit. Interacts with proteins S7 and S18. Binds to IF-3.

Functionally, located on the platform of the 30S subunit, it bridges several disparate RNA helices of the 16S rRNA. Forms part of the Shine-Dalgarno cleft in the 70S ribosome. In Treponema pallidum (strain Nichols), this protein is Small ribosomal subunit protein uS11.